A 442-amino-acid chain; its full sequence is MAMFGFPHWQLKSTSTESGVVAPDERLPFAQTAVMGVQHAVAMFGATVLMPILMGLDPNLSILMSGIGTLLFFFITGGRVPSYLGSSAAFVGVVIAATGFNGQGINPNISIALGGIIACGLVYTVIGLVVMKIGTRWIERLMPPVVTGAVVMAIGLNLAPIAVKSVSASAFDSWMAVMTVLCIGLVAVFTRGMIQRLLILVGLIVACLLYGVMTNVLGLGKAVDFTLVSHAAWFGLPHFSTPAFNGQAMMLIAPVAVILVAENLGHLKAVAGMTGRNMDPYMGRAFVGDGLATMLSGSVGGSGVTTYAENIGVMAVTKVYSTLVFVAAAVIAMLLGFSPKFGALIHTIPAAVIGGASIVVFGLIAVAGARIWVQNRVDLSQNGNLIMVAVTLVLGAGDFALTLGGFTLGGIGTATFGAILLNALLSRKLVDVPPPEVVHQEP.

Residues 1–57 (MAMFGFPHWQLKSTSTESGVVAPDERLPFAQTAVMGVQHAVAMFGATVLMPILMGLD) lie on the Cytoplasmic side of the membrane. A helical membrane pass occupies residues 58-78 (PNLSILMSGIGTLLFFFITGG). Residue Arg79 is a topological domain, periplasmic. A helical membrane pass occupies residues 80-100 (VPSYLGSSAAFVGVVIAATGF). Topologically, residues 101 to 110 (NGQGINPNIS) are cytoplasmic. Residues 111–131 (IALGGIIACGLVYTVIGLVVM) traverse the membrane as a helical segment. The Periplasmic portion of the chain corresponds to 132 to 140 (KIGTRWIER). A helical transmembrane segment spans residues 141 to 161 (LMPPVVTGAVVMAIGLNLAPI). Topologically, residues 162 to 169 (AVKSVSAS) are cytoplasmic. Residues 170 to 190 (AFDSWMAVMTVLCIGLVAVFT) form a helical membrane-spanning segment. Residues 191-196 (RGMIQR) lie on the Periplasmic side of the membrane. A helical membrane pass occupies residues 197–217 (LLILVGLIVACLLYGVMTNVL). Over 218-240 (GLGKAVDFTLVSHAAWFGLPHFS) the chain is Cytoplasmic. The helical transmembrane segment at 241 to 261 (TPAFNGQAMMLIAPVAVILVA) threads the bilayer. The Periplasmic portion of the chain corresponds to 262 to 284 (ENLGHLKAVAGMTGRNMDPYMGR). A helical transmembrane segment spans residues 285 to 305 (AFVGDGLATMLSGSVGGSGVT). At 306–318 (TYAENIGVMAVTK) the chain is on the cytoplasmic side. Residues 319-339 (VYSTLVFVAAAVIAMLLGFSP) form a helical membrane-spanning segment. Over 340 to 347 (KFGALIHT) the chain is Periplasmic. The chain crosses the membrane as a helical span at residues 348–368 (IPAAVIGGASIVVFGLIAVAG). Residues 369-385 (ARIWVQNRVDLSQNGNL) lie on the Cytoplasmic side of the membrane. A run of 2 helical transmembrane segments spans residues 386–406 (IMVA…LGGF) and 407–427 (TLGG…LLSR). The Cytoplasmic segment spans residues 428 to 442 (KLVDVPPPEVVHQEP).

The protein belongs to the nucleobase:cation symporter-2 (NCS2) (TC 2.A.40) family.

The protein localises to the cell inner membrane. Functionally, may function as a proton-driven pyrimidine uptake system. This chain is Putative pyrimidine permease RutG (rutG), found in Escherichia coli (strain K12).